We begin with the raw amino-acid sequence, 406 residues long: Lymphocyte transmembrane adapter 1 (406 aa).

A disordered region spans residues 1–25; that stretch reads MYTTPAPPEITRRSSEPSTQQGTLG. Over 1–33 the chain is Extracellular; sequence MYTTPAPPEITRRSSEPSTQQGTLGSLEGEKGH. A helical; Signal-anchor for type III membrane protein transmembrane segment spans residues 34–54; it reads LLFPGFVVLVTIFLVVIVTCI. The Cytoplasmic segment spans residues 55-406; sequence LWSRKKQKKR…LATETSGEEV (352 aa). The segment at 109–131 is disordered; the sequence is ESLLSRASDSPEPEVPQASGSLQ. Y184 is subject to Phosphotyrosine. The interval 219 to 258 is disordered; it reads AEGGHAGCGKATDRTGVWAPGLQGSNSLSEGDDSSQSSND. A compositionally biased stretch (low complexity) spans 242–258; the sequence is GSNSLSEGDDSSQSSND. Phosphotyrosine is present on residues Y259, Y285, and Y352. The interval 358 to 406 is disordered; sequence PELEGKDWKQGPGTWHPSDERTPSDQAGKFCEAVYPAGSLATETSGEEV.

As to quaternary structure, when phosphorylated, interacts with GRB2, PIK3R1 and GRAP2. In terms of processing, phosphorylated on tyrosines upon TCR or BCR activation; which leads to the recruitment of GRB2, PIK3R1 and GRAP2.

Its subcellular location is the cell membrane. Its function is as follows. Negatively regulates TCR (T-cell antigen receptor)-mediated signaling in T-cells and BCR (B-cell antigen receptor)-mediated signaling in B-cells. The chain is Lymphocyte transmembrane adapter 1 (Lax1) from Rattus norvegicus (Rat).